The following is a 375-amino-acid chain: 4,4'-diaponeurosporenoate glycosyltransferase (375 aa).

4 consecutive transmembrane segments (helical) span residues 3–23, 164–184, 277–297, and 330–350; these read WLSR…ALIF, FYEG…NVFS, IMAA…GLCL, and FSNL…KIFI.

It belongs to the glycosyltransferase 2 family. CrtQ subfamily.

The protein localises to the cell membrane. Its pathway is carotenoid biosynthesis; staphyloxanthin biosynthesis; staphyloxanthin from farnesyl diphosphate: step 4/5. Catalyzes the glycosylation of 4,4'-diaponeurosporenoate, i.e. the esterification of glucose at the C1'' position with the carboxyl group of 4,4'-diaponeurosporenic acid, to form glycosyl-4,4'-diaponeurosporenoate. This is a step in the biosynthesis of staphyloxanthin, an orange pigment present in most staphylococci strains. This chain is 4,4'-diaponeurosporenoate glycosyltransferase (crtQ), found in Staphylococcus aureus (strain MRSA252).